A 156-amino-acid polypeptide reads, in one-letter code: Transcription antitermination protein NusB (156 aa).

This sequence belongs to the NusB family.

Functionally, involved in transcription antitermination. Required for transcription of ribosomal RNA (rRNA) genes. Binds specifically to the boxA antiterminator sequence of the ribosomal RNA (rrn) operons. The chain is Transcription antitermination protein NusB from Vibrio cholerae serotype O1 (strain ATCC 39541 / Classical Ogawa 395 / O395).